The primary structure comprises 424 residues: Enolase (424 aa).

Q165 contacts (2R)-2-phosphoglycerate. E207 functions as the Proton donor in the catalytic mechanism. D244, E283, and D310 together coordinate Mg(2+). K335, R364, S365, and K386 together coordinate (2R)-2-phosphoglycerate. The Proton acceptor role is filled by K335.

The protein belongs to the enolase family. Mg(2+) serves as cofactor.

Its subcellular location is the cytoplasm. The protein resides in the secreted. It is found in the cell surface. The enzyme catalyses (2R)-2-phosphoglycerate = phosphoenolpyruvate + H2O. It participates in carbohydrate degradation; glycolysis; pyruvate from D-glyceraldehyde 3-phosphate: step 4/5. Its function is as follows. Catalyzes the reversible conversion of 2-phosphoglycerate (2-PG) into phosphoenolpyruvate (PEP). It is essential for the degradation of carbohydrates via glycolysis. This chain is Enolase, found in Chlamydia muridarum (strain MoPn / Nigg).